We begin with the raw amino-acid sequence, 56 residues long: Large ribosomal subunit protein bL33 (56 aa).

Belongs to the bacterial ribosomal protein bL33 family.

The chain is Large ribosomal subunit protein bL33 from Dichelobacter nodosus (strain VCS1703A).